The primary structure comprises 135 residues: UPF0102 protein Mkms_2031 (135 aa).

The protein belongs to the UPF0102 family.

This is UPF0102 protein Mkms_2031 from Mycobacterium sp. (strain KMS).